The chain runs to 339 residues: Anthranilate phosphoribosyltransferase (339 aa).

5-phospho-alpha-D-ribose 1-diphosphate contacts are provided by residues Gly79, 82-83 (GD), Thr87, 89-92 (NVST), 107-115 (KHGNRSVSS), and Ser119. Gly79 lines the anthranilate pocket. A Mg(2+)-binding site is contributed by Ser91. Asn110 lines the anthranilate pocket. Arg165 serves as a coordination point for anthranilate. Positions 224 and 225 each coordinate Mg(2+).

It belongs to the anthranilate phosphoribosyltransferase family. As to quaternary structure, homodimer. It depends on Mg(2+) as a cofactor.

The catalysed reaction is N-(5-phospho-beta-D-ribosyl)anthranilate + diphosphate = 5-phospho-alpha-D-ribose 1-diphosphate + anthranilate. Its pathway is amino-acid biosynthesis; L-tryptophan biosynthesis; L-tryptophan from chorismate: step 2/5. Its function is as follows. Catalyzes the transfer of the phosphoribosyl group of 5-phosphorylribose-1-pyrophosphate (PRPP) to anthranilate to yield N-(5'-phosphoribosyl)-anthranilate (PRA). This chain is Anthranilate phosphoribosyltransferase, found in Caldivirga maquilingensis (strain ATCC 700844 / DSM 13496 / JCM 10307 / IC-167).